A 530-amino-acid polypeptide reads, in one-letter code: UDP-glucuronosyltransferase 1A10 (530 aa).

The first 25 residues, 1–25 (MARAGWTSPVPLCVCLLLTCGFAEA), serve as a signal peptide directing secretion. N-linked (GlcNAc...) asparagine glycosylation is found at Asn71, Asn292, and Asn344. The helical transmembrane segment at 488–504 (VIGFLLAVVLTVAFITF) threads the bilayer.

It belongs to the UDP-glycosyltransferase family. Homodimer. Homooligomer. Interacts with UGT1A1, UGT1A3, UGT1A4, UGT1A6, UGT1A7, UGT1A8 and UGT1A9 to form heterodimers. Isoform 1 interacts with isoform 2/i2 suggesting that oligomerization is involved in negative regulation of transferase activity by isoform 2. Isoform 1 also interacts with respective i2 isoforms of UGT1A1, UGT1A3, UGT1A4, UGT1A6, UGT1A7, UGT1A8 and UGT1A9. Liver and colon. Isoform 1 and isoform 2 are expressed in colon, esophagus and small intestine; isoform 2 but not isoform 1 is expressed in liver or kidney.

The protein localises to the endoplasmic reticulum membrane. The catalysed reaction is glucuronate acceptor + UDP-alpha-D-glucuronate = acceptor beta-D-glucuronoside + UDP + H(+). It carries out the reaction 17beta-estradiol + UDP-alpha-D-glucuronate = 17beta-estradiol 3-O-(beta-D-glucuronate) + UDP + H(+). It catalyses the reaction 17beta-estradiol + UDP-alpha-D-glucuronate = 17beta-estradiol 17-O-(beta-D-glucuronate) + UDP + H(+). The enzyme catalyses 17alpha-estradiol + UDP-alpha-D-glucuronate = 17alpha-estradiol 3-O-(beta-D-glucuronate) + UDP + H(+). The catalysed reaction is 16alpha,17beta-estriol + UDP-alpha-D-glucuronate = 16alpha,17beta-estriol 3-O-(beta-D-glucuronate) + UDP + H(+). It carries out the reaction 16beta,17beta-estriol + UDP-alpha-D-glucuronate = 16beta,17beta-estriol 3-O-(beta-D-glucuronate) + UDP + H(+). It catalyses the reaction 16alpha,17alpha-estriol + UDP-alpha-D-glucuronate = 16alpha,17alpha-estriol 3-O-(beta-D-glucuronate) + UDP + H(+). The enzyme catalyses 16alpha-hydroxyestrone + UDP-alpha-D-glucuronate = 16alpha-hydroxyestrone 3-O-(beta-D-glucuronate) + UDP + H(+). The catalysed reaction is estrone + UDP-alpha-D-glucuronate = estrone 3-O-(beta-D-glucuronate) + UDP + H(+). It carries out the reaction prunetin + UDP-alpha-D-glucuronate = prunetin-4'-O-beta-D-glucuronide + UDP. It catalyses the reaction (5Z,8Z,11Z,14Z)-eicosatetraenoate + UDP-alpha-D-glucuronate = O-[(5Z),(8Z),(11Z),(14Z)-eicosatetraenoyl]-beta-D-glucuronate + UDP. The enzyme catalyses 15-hydroxy-(5Z,8Z,11Z,13E)-eicosatetraenoate + UDP-alpha-D-glucuronate = 15-O-(beta-D-glucuronosyl)-(5Z,8Z,11Z,14Z)-eicosatetraenoate + UDP + H(+). The catalysed reaction is prostaglandin B1 + UDP-alpha-D-glucuronate = 15-O-(beta-D-glucuronosyl)-prostaglandin B1 + UDP + H(+). It carries out the reaction (E)-ferulate + UDP-alpha-D-glucuronate = (E)-4-O-(beta-D-glucuronosyl)-ferulate + UDP + H(+). It catalyses the reaction (E)-ferulate + UDP-alpha-D-glucuronate = (E)-ferulic acid beta-D-glucuronate ester + UDP. The enzyme catalyses losartan + UDP-alpha-D-glucuronate = losartan-2-N-beta-D-glucuronide + UDP. The catalysed reaction is candesartan + UDP-alpha-D-glucuronate = candesartan O-beta-D-glucuronoside + UDP. It carries out the reaction candesartan + UDP-alpha-D-glucuronate = candesartan-2-N-beta-D-glucuronide + UDP. It catalyses the reaction zolasartan + UDP-alpha-D-glucuronate = zolarsartan-1-N-beta-D-glucuronide + UDP. Its function is as follows. UDP-glucuronosyltransferase (UGT) that catalyzes phase II biotransformation reactions in which lipophilic substrates are conjugated with glucuronic acid to increase the metabolite's water solubility, thereby facilitating excretion into either the urine or bile. Essential for the elimination and detoxification of drugs, xenobiotics and endogenous compounds. Catalyzes the glucuronidation of endogenous estrogen hormones such as estradiol, estrone and estriol. Involved in the glucuronidation of arachidonic acid (AA) and AA-derived eicosanoids including 15-HETE and PGB1. Involved in the glucuronidation of the phytochemical ferulic acid at the phenolic or the carboxylic acid group. Also catalyzes the glucuronidation of the isoflavones genistein, daidzein, glycitein, formononetin, biochanin A and prunetin, which are phytoestrogens with anticancer and cardiovascular properties. Involved in the glucuronidation of the AGTR1 angiotensin receptor antagonist losartan, caderastan and zolarsatan, drugs which can inhibit the effect of angiotensin II. Lacks UGT glucuronidation activity but acts as a negative regulator of isoform 1. The protein is UDP-glucuronosyltransferase 1A10 of Homo sapiens (Human).